We begin with the raw amino-acid sequence, 207 residues long: MRLESVAKFHSPKSPMMSDSPRATASDSLSGTDVMAAMGMAQSQAGFGMAAFCGKHELSQNDKQKAINYLMQFAHKVSGKYPGVAKLEGNTKAKVLQVLATFAYADYCRSAATPGARCRDCHGTGRAVDIAKTEQWGRVVEKVCGRCKGVGYSKVPASAAYRAITMLIPNLTQPTWSRTVKPLYDALVVQCHKEESIADNILNAVTR.

A disordered region spans residues 1-28 (MRLESVAKFHSPKSPMMSDSPRATASDS). Cysteine 118, cysteine 121, cysteine 144, and cysteine 147 together coordinate Zn(2+). The segment at 118–147 (CRDCHGTGRAVDIAKTEQWGRVVEKVCGRC) is a zinc-finger region. The DNA-binding element occupies 171 to 192 (LTQPTWSRTVKPLYDALVVQCH).

It belongs to the phage antitermination Q type 2 family. Interacts with host RPOB (via flap domain); this interaction renders host RNAP resistant to transcription pausing and allows it to read through termination signals. Interacts with host RNA polymerase sigma factor RPOD (via domain-4). Interacts with host NUSA (via N-terminus and AR2 domain); this interaction releases the autoinhibition of NUSA.

In terms of biological role, mediates the switch from middle to viral late gene expression by associating with host RNA polymerase (RNAP) so that the latter can read without pausing and through transcription terminators preceding late genes. Competes with host factor sigma 70 for binding to RPOB, the beta-subunit of host RNAP. To join the elongation complex, binds a specific DNA Q-binding element (QBE) and interacts with RNAP that is paused during early elongation. Participates in the lysis-lysogeny decision by activating the expression of the late lytic genes. This chain is Antitermination protein Q (23), found in Salmonella phage P22 (Bacteriophage P22).